The primary structure comprises 256 residues: Phosphate import ATP-binding protein PstB (256 aa).

Residues 10-251 (IRTVNVNFYY…PEQKQTEDYI (242 aa)) enclose the ABC transporter domain. 42–49 (GPSGCGKS) serves as a coordination point for ATP.

This sequence belongs to the ABC transporter superfamily. Phosphate importer (TC 3.A.1.7) family. In terms of assembly, the complex is composed of two ATP-binding proteins (PstB), two transmembrane proteins (PstC and PstA) and a solute-binding protein (PstS).

It localises to the cell inner membrane. The enzyme catalyses phosphate(out) + ATP + H2O = ADP + 2 phosphate(in) + H(+). Part of the ABC transporter complex PstSACB involved in phosphate import. Responsible for energy coupling to the transport system. The polypeptide is Phosphate import ATP-binding protein PstB (Syntrophus aciditrophicus (strain SB)).